The chain runs to 255 residues: Type III pantothenate kinase (255 aa).

Position 6-13 (D6–V13) interacts with ATP. Substrate is bound by residues Y100 and G107–R110. D109 (proton acceptor) is an active-site residue. D129 contributes to the K(+) binding site. T132 is an ATP binding site. Substrate is bound at residue T184.

This sequence belongs to the type III pantothenate kinase family. In terms of assembly, homodimer. Requires NH4(+) as cofactor. The cofactor is K(+).

The protein resides in the cytoplasm. It carries out the reaction (R)-pantothenate + ATP = (R)-4'-phosphopantothenate + ADP + H(+). It functions in the pathway cofactor biosynthesis; coenzyme A biosynthesis; CoA from (R)-pantothenate: step 1/5. Functionally, catalyzes the phosphorylation of pantothenate (Pan), the first step in CoA biosynthesis. The sequence is that of Type III pantothenate kinase from Acetivibrio thermocellus (strain ATCC 27405 / DSM 1237 / JCM 9322 / NBRC 103400 / NCIMB 10682 / NRRL B-4536 / VPI 7372) (Clostridium thermocellum).